We begin with the raw amino-acid sequence, 475 residues long: MEIOTIC F-BOX protein MOF (475 aa).

The interval 1–58 (MRRERDATQIPENPMEGIPQTAAAAAAAAAAEASEPPRKRARVDGGGGGAGEEEEDRL) is disordered. The span at 22–33 (AAAAAAAAAAEA) shows a compositional bias: low complexity. One can recognise an F-box domain in the interval 55–91 (EDRLSDLPDCLLEDILAHLGSRQAVQTSVLSRRWRNL).

Belongs to the F-box protein family. FBX subfamily. Part of a SCF (SKP1-CUL1-F-box protein) E3 ubiquitin-protein ligase complex. Interacts (via F-box domain) directly with SKP1. In terms of tissue distribution, highly expressed in the stem, leaf and in the anther during meiosis. Weakly expressed in roots and lemma/palea.

It localises to the nucleus. Its subcellular location is the chromosome. It participates in protein modification; protein ubiquitination. Functionally, probable component of a SCF (SKP1-CULLIN-F-box protein) E3 ubiquitin-protein ligase complex and may function through the ubiquitin-mediated protein degradation or signaling pathway. Required for male meiotic prophase I progression. Required for telomere bouquet formation, homologous chromosome pairing and for the formation of the synaptonemal complex (SC), which stabilizes initial chromosomal axial associations and promotes crossover formation. Involved in meiotic DNA double-strand break (DSB) end-processing and repair, and is important in the recruitment of DSB repair proteins to the DSB sites. The polypeptide is MEIOTIC F-BOX protein MOF (Oryza sativa subsp. japonica (Rice)).